A 122-amino-acid polypeptide reads, in one-letter code: Large ribosomal subunit protein uL14 (122 aa).

It belongs to the universal ribosomal protein uL14 family. As to quaternary structure, part of the 50S ribosomal subunit. Forms a cluster with proteins L3 and L19. In the 70S ribosome, L14 and L19 interact and together make contacts with the 16S rRNA in bridges B5 and B8.

Functionally, binds to 23S rRNA. Forms part of two intersubunit bridges in the 70S ribosome. This is Large ribosomal subunit protein uL14 from Bordetella avium (strain 197N).